The chain runs to 191 residues: NF-kappa-B inhibitor-interacting Ras-like protein 2 (191 aa).

The interval 1–191 is small GTPase-like; that stretch reads MGKSCKVVVC…KNKGSGSLDG (191 aa). 11–18 serves as a coordination point for GTP; it reads GQASVGKT. Positions 35 to 43 match the Effector region motif; sequence MIETQEDIY. Residues 61–65 and 120–123 contribute to the GTP site; these read DTRGL and NKCD. The interval 169 to 191 is disordered; sequence TQPQSKSAFPLSRKNKGSGSLDG.

It belongs to the small GTPase superfamily. Ras family. KappaB-Ras subfamily. As to quaternary structure, interacts with both NF-kappa-B inhibitor alpha (NFKBIA) and beta (NFKBIB) in vitro. However, it probably only interacts with NFKBIB in vivo. Interacts with GFOD1. In terms of tissue distribution, widely expressed.

It is found in the cytoplasm. Its function is as follows. Atypical Ras-like protein that acts as a potent regulator of NF-kappa-B activity by preventing the degradation of NF-kappa-B inhibitor beta (NFKBIB) by most signals, explaining why NFKBIB is more resistant to degradation. May act by blocking phosphorylation of NFKBIB and nuclear localization of p65/RELA NF-kappa-B subunit. It is unclear whether it acts as a GTPase. Both GTP- and GDP-bound forms block phosphorylation of NFKBIB. The sequence is that of NF-kappa-B inhibitor-interacting Ras-like protein 2 (NKIRAS2) from Homo sapiens (Human).